The primary structure comprises 323 residues: Large ribosomal subunit protein uL10 (323 aa).

The interval 296-323 (AAPAAPSAAAKEEPEESDEDDFGMGGLF) is disordered. Positions 308-317 (EPEESDEDDF) are enriched in acidic residues.

The protein belongs to the universal ribosomal protein uL10 family. P0 forms a pentameric complex by interaction with dimers of P1 and P2. In terms of processing, phosphorylated.

In terms of biological role, ribosomal protein P0 is the functional equivalent of E.coli protein L10. This Leishmania infantum protein is Large ribosomal subunit protein uL10 (LIPO-A).